The following is a 305-amino-acid chain: Regulator of microtubule dynamics protein 1 (305 aa).

N6-succinyllysine is present on lysine 160. TPR repeat units follow at residues 163–199 (AICI…NPKD) and 217–253 (PWYQ…DPNF). The residue at position 245 (lysine 245) is an N6-succinyllysine.

Belongs to the RMDN family. In terms of assembly, interacts with microtubules.

The protein localises to the cytoplasm. The protein resides in the cytoskeleton. It localises to the spindle. Its subcellular location is the spindle pole. The chain is Regulator of microtubule dynamics protein 1 (Rmdn1) from Mus musculus (Mouse).